We begin with the raw amino-acid sequence, 83 residues long: MSGNTGERPFGDIITSIRYWVIHSITIPSLFIAGWLFVSTGLAYDVFGSPRPNEYFTESRQEVPLITGRFNSLDQLDEFTRSL.

Residues 21–35 form a helical membrane-spanning segment; it reads VIHSITIPSLFIAGW. H23 lines the heme pocket.

The protein belongs to the PsbE/PsbF family. Heterodimer of an alpha subunit and a beta subunit. PSII is composed of 1 copy each of membrane proteins PsbA, PsbB, PsbC, PsbD, PsbE, PsbF, PsbH, PsbI, PsbJ, PsbK, PsbL, PsbM, PsbT, PsbX, PsbY, PsbZ, Psb30/Ycf12, at least 3 peripheral proteins of the oxygen-evolving complex and a large number of cofactors. It forms dimeric complexes. Heme b serves as cofactor.

It localises to the plastid. The protein resides in the chloroplast thylakoid membrane. This b-type cytochrome is tightly associated with the reaction center of photosystem II (PSII). PSII is a light-driven water:plastoquinone oxidoreductase that uses light energy to abstract electrons from H(2)O, generating O(2) and a proton gradient subsequently used for ATP formation. It consists of a core antenna complex that captures photons, and an electron transfer chain that converts photonic excitation into a charge separation. The polypeptide is Cytochrome b559 subunit alpha (Staurastrum punctulatum (Green alga)).